Here is a 182-residue protein sequence, read N- to C-terminus: MERYGKPELRATTVLGVIRNGKAALGSDGQMTLGNTVIKHSTRKIRRLRQAQIVTGFAGATADAVTLLDRFEEKLQTYGGLLERAAVELARDWRTDKYLRRLEAMLAVVSPEKALIISGTGDVIEPEDGIVAIGSGSMFALAAARSLMKHTDLNAADIVRESLLIAADICIYTNDHIVLEEV.

The active site involves Thr-12. The Na(+) site is built by Ala-167, Cys-170, and Thr-173.

It belongs to the peptidase T1B family. HslV subfamily. A double ring-shaped homohexamer of HslV is capped on each side by a ring-shaped HslU homohexamer. The assembly of the HslU/HslV complex is dependent on binding of ATP.

It is found in the cytoplasm. It carries out the reaction ATP-dependent cleavage of peptide bonds with broad specificity.. Allosterically activated by HslU binding. Functionally, protease subunit of a proteasome-like degradation complex believed to be a general protein degrading machinery. The chain is ATP-dependent protease subunit HslV from Chlorobium phaeobacteroides (strain BS1).